A 533-amino-acid chain; its full sequence is ATP synthase F(1) complex catalytic subunit beta, mitochondrial (533 aa).

The transit peptide at 1-53 (MLGLAGRCSAAAASAARPALRRAAGPSHGFLPLLLSRGAGPAAAVGARRDHAA) directs the protein to the mitochondrion. Glycine 214, valine 215, glycine 216, lysine 217, threonine 218, and valine 219 together coordinate ADP. Glycine 214 contacts ATP. Phosphate contacts are provided by glycine 214, valine 215, glycine 216, lysine 217, and threonine 218. The ATP site is built by glycine 216, lysine 217, threonine 218, and valine 219. Position 218 (threonine 218) interacts with Mg(2+). Glutamate 243 contributes to the Mg(2+) binding site. Arginine 244 provides a ligand contact to ATP.

As to quaternary structure, homotrimer. Component of the ATP synthase complex composed at least of ATP5F1A/subunit alpha, ATP5F1B/subunit beta, ATP5MC1/subunit c (homooctomer), MT-ATP6/subunit a, MT-ATP8/subunit 8, ATP5ME/subunit e, ATP5MF/subunit f, ATP5MG/subunit g, ATP5MK/subunit k, ATP5MJ/subunit j, ATP5F1C/subunit gamma, ATP5F1D/subunit delta, ATP5F1E/subunit epsilon, ATP5PF/subunit F6, ATP5PB/subunit b, ATP5PD/subunit d, ATP5PO/subunit OSCP. ATP synthase complex consists of a soluble F(1) head domain (subunits alpha(3) and beta(3)) - the catalytic core - and a membrane F(0) domain - the membrane proton channel (subunits c, a, 8, e, f, g, k and j). These two domains are linked by a central stalk (subunits gamma, delta, and epsilon) rotating inside the F1 region and a stationary peripheral stalk (subunits F6, b, d, and OSCP).

Its subcellular location is the mitochondrion inner membrane. It carries out the reaction ATP + H2O + 4 H(+)(in) = ADP + phosphate + 5 H(+)(out). Functionally, catalytic subunit beta, of the mitochondrial membrane ATP synthase complex (F(1)F(0) ATP synthase or Complex V) that produces ATP from ADP in the presence of a proton gradient across the membrane which is generated by electron transport complexes of the respiratory chain. ATP synthase complex consist of a soluble F(1) head domain - the catalytic core - and a membrane F(1) domain - the membrane proton channel. These two domains are linked by a central stalk rotating inside the F(1) region and a stationary peripheral stalk. During catalysis, ATP synthesis in the catalytic domain of F(1) is coupled via a rotary mechanism of the central stalk subunits to proton translocation. In vivo, can only synthesize ATP although its ATP hydrolase activity can be activated artificially in vitro. With the subunit alpha (ATP5F1A), forms the catalytic core in the F(1) domain. This is ATP synthase F(1) complex catalytic subunit beta, mitochondrial from Gallus gallus (Chicken).